The sequence spans 96 residues: UPF0166 protein aq_448 (96 aa).

Belongs to the UPF0166 family.

This is UPF0166 protein aq_448 from Aquifex aeolicus (strain VF5).